The primary structure comprises 222 residues: Pleckstrin homology domain-containing family B member 2 (222 aa).

In terms of domain architecture, PH spans 2–109; sequence AFVKSGWLLR…WKFTLQDSRT (108 aa). Lysine 20 serves as a coordination point for a 1,2-diacyl-sn-glycero-3-phospho-L-serine.

The protein resides in the recycling endosome membrane. Its function is as follows. Involved in retrograde transport of recycling endosomes. The polypeptide is Pleckstrin homology domain-containing family B member 2 (PLEKHB2) (Pongo abelii (Sumatran orangutan)).